The following is a 254-amino-acid chain: Ribosomal RNA large subunit methyltransferase E (254 aa).

Residues 1-28 (MTTPPRGPDGRPLKVRVKKSRGRTTSSQ) are disordered. Positions 13–22 (LKVRVKKSRG) are enriched in basic residues. Positions 80, 82, 103, 119, and 143 each coordinate S-adenosyl-L-methionine. The Proton acceptor role is filled by K183. The disordered stretch occupies residues 231–254 (DRAETDDAGTDGTGTAEAQAPRDQ).

Belongs to the class I-like SAM-binding methyltransferase superfamily. RNA methyltransferase RlmE family.

The protein localises to the cytoplasm. The enzyme catalyses uridine(2552) in 23S rRNA + S-adenosyl-L-methionine = 2'-O-methyluridine(2552) in 23S rRNA + S-adenosyl-L-homocysteine + H(+). In terms of biological role, specifically methylates the uridine in position 2552 of 23S rRNA at the 2'-O position of the ribose in the fully assembled 50S ribosomal subunit. This Xanthobacter autotrophicus (strain ATCC BAA-1158 / Py2) protein is Ribosomal RNA large subunit methyltransferase E.